A 245-amino-acid chain; its full sequence is Ribonuclease 3 (245 aa).

In terms of domain architecture, RNase III spans 24–146 (YTVFSQKLGY…IIGAIYLESG (123 aa)). Glutamate 59 provides a ligand contact to Mg(2+). Residue aspartate 63 is part of the active site. Mg(2+) is bound by residues asparagine 132 and glutamate 135. Residue glutamate 135 is part of the active site. Residues 173 to 243 (DPKTLLQEYL…ARRAYKLAVV (71 aa)) enclose the DRBM domain.

Belongs to the ribonuclease III family. In terms of assembly, homodimer. The cofactor is Mg(2+).

Its subcellular location is the cytoplasm. The enzyme catalyses Endonucleolytic cleavage to 5'-phosphomonoester.. Its function is as follows. Digests double-stranded RNA. Involved in the processing of primary rRNA transcript to yield the immediate precursors to the large and small rRNAs (23S and 16S). Processes some mRNAs, and tRNAs when they are encoded in the rRNA operon. Processes pre-crRNA and tracrRNA of type II CRISPR loci if present in the organism. The polypeptide is Ribonuclease 3 (Nitrosomonas eutropha (strain DSM 101675 / C91 / Nm57)).